The following is a 150-amino-acid chain: MKLINAYTDGSCLGNPGPGGWAVLLRYKNNEKELVGGELDTTNNRMELMAAIMALERLSEPCQIKLHTDSQYVRQGITEWMSGWVRRGWKTAAGDPVKNRDLWERLCAATQRHMIEWCWVKAHNGDSDNERVDVLARGQAMAQRSTVASR.

The RNase H type-1 domain occupies 1–141 (MKLINAYTDG…VDVLARGQAM (141 aa)). Asp9, Glu47, Asp69, and Asp133 together coordinate Mg(2+).

Belongs to the RNase H family. In terms of assembly, monomer. Mg(2+) is required as a cofactor.

It is found in the cytoplasm. It catalyses the reaction Endonucleolytic cleavage to 5'-phosphomonoester.. Its function is as follows. Endonuclease that specifically degrades the RNA of RNA-DNA hybrids. This chain is Ribonuclease HI, found in Xylella fastidiosa (strain Temecula1 / ATCC 700964).